Consider the following 383-residue polypeptide: S-adenosylmethionine synthase (383 aa).

ATP is bound at residue His15. Residue Asp17 coordinates Mg(2+). Position 43 (Glu43) interacts with K(+). Residues Glu56 and Gln99 each coordinate L-methionine. A flexible loop region spans residues 99–109 (QSPDINQGVDR). ATP contacts are provided by residues 164 to 166 (DAK), 230 to 231 (RF), Asp239, 245 to 246 (RK), Ala262, and Lys266. Asp239 serves as a coordination point for L-methionine. Lys270 contributes to the L-methionine binding site.

Belongs to the AdoMet synthase family. As to quaternary structure, homotetramer; dimer of dimers. The cofactor is Mg(2+). K(+) is required as a cofactor.

The protein resides in the cytoplasm. The catalysed reaction is L-methionine + ATP + H2O = S-adenosyl-L-methionine + phosphate + diphosphate. Its pathway is amino-acid biosynthesis; S-adenosyl-L-methionine biosynthesis; S-adenosyl-L-methionine from L-methionine: step 1/1. Its function is as follows. Catalyzes the formation of S-adenosylmethionine (AdoMet) from methionine and ATP. The overall synthetic reaction is composed of two sequential steps, AdoMet formation and the subsequent tripolyphosphate hydrolysis which occurs prior to release of AdoMet from the enzyme. This is S-adenosylmethionine synthase from Shewanella amazonensis (strain ATCC BAA-1098 / SB2B).